Consider the following 238-residue polypeptide: Ribonuclease HII (238 aa).

In terms of domain architecture, RNase H type-2 spans 12–197 (GIVAGVDEAG…VLELLTDDLL (186 aa)). A divalent metal cation contacts are provided by aspartate 18, glutamate 19, and aspartate 107.

This sequence belongs to the RNase HII family. The cofactor is Mn(2+). Mg(2+) is required as a cofactor.

It localises to the cytoplasm. The catalysed reaction is Endonucleolytic cleavage to 5'-phosphomonoester.. Functionally, endonuclease that specifically degrades the RNA of RNA-DNA hybrids. The protein is Ribonuclease HII (rnhB) of Thermotoga maritima (strain ATCC 43589 / DSM 3109 / JCM 10099 / NBRC 100826 / MSB8).